A 155-amino-acid polypeptide reads, in one-letter code: Xanthine-guanine phosphoribosyltransferase 2 (155 aa).

Residues 37 to 38 (RG) and 91 to 99 (DDLVDTGNT) each bind 5-phospho-alpha-D-ribose 1-diphosphate. Asp92 serves as a coordination point for Mg(2+). Guanine-binding residues include Asp95 and Ile138. 2 residues coordinate xanthine: Asp95 and Ile138. GMP-binding positions include 95 to 99 (DTGNT) and 137 to 138 (WI).

This sequence belongs to the purine/pyrimidine phosphoribosyltransferase family. XGPT subfamily. Homotetramer. It depends on Mg(2+) as a cofactor.

The protein localises to the cell inner membrane. The enzyme catalyses GMP + diphosphate = guanine + 5-phospho-alpha-D-ribose 1-diphosphate. It catalyses the reaction XMP + diphosphate = xanthine + 5-phospho-alpha-D-ribose 1-diphosphate. It carries out the reaction IMP + diphosphate = hypoxanthine + 5-phospho-alpha-D-ribose 1-diphosphate. It functions in the pathway purine metabolism; GMP biosynthesis via salvage pathway; GMP from guanine: step 1/1. Its pathway is purine metabolism; XMP biosynthesis via salvage pathway; XMP from xanthine: step 1/1. Functionally, purine salvage pathway enzyme that catalyzes the transfer of the ribosyl-5-phosphate group from 5-phospho-alpha-D-ribose 1-diphosphate (PRPP) to the N9 position of the 6-oxopurines guanine and xanthine to form the corresponding ribonucleotides GMP (guanosine 5'-monophosphate) and XMP (xanthosine 5'-monophosphate), with the release of PPi. To a lesser extent, also acts on hypoxanthine. This Haemophilus influenzae (strain 86-028NP) protein is Xanthine-guanine phosphoribosyltransferase 2.